Reading from the N-terminus, the 855-residue chain is Glucans biosynthesis glucosyltransferase H (855 aa).

The next 6 helical transmembrane spans lie at I142–L162, I196–M216, V515–L535, L572–W592, T606–F626, and F682–I702.

This sequence belongs to the glycosyltransferase 2 family. OpgH subfamily.

It localises to the cell inner membrane. It functions in the pathway glycan metabolism; osmoregulated periplasmic glucan (OPG) biosynthesis. In terms of biological role, involved in the biosynthesis of osmoregulated periplasmic glucans (OPGs). The polypeptide is Glucans biosynthesis glucosyltransferase H (Pseudomonas entomophila (strain L48)).